The following is a 350-amino-acid chain: Ion-translocating oxidoreductase complex subunit D (350 aa).

4 helical membrane-spanning segments follow: residues 20–40 (VMLW…LFFG), 42–62 (GNLI…AAFL), 89–109 (LPQF…IVVA), and 120–140 (PFNP…VAMT). Position 178 is an FMN phosphoryl threonine (Thr178). Helical transmembrane passes span 204-224 (LIAR…VLLI), 228-248 (IITW…SLAF), 255-275 (YAPL…FFIA), 282-302 (ATSH…VYLI), and 306-326 (GNYP…VPFI).

Belongs to the NqrB/RnfD family. As to quaternary structure, the complex is composed of six subunits: RnfA, RnfB, RnfC, RnfD, RnfE and RnfG. FMN is required as a cofactor.

It is found in the cell inner membrane. Its function is as follows. Part of a membrane-bound complex that couples electron transfer with translocation of ions across the membrane. The chain is Ion-translocating oxidoreductase complex subunit D from Marinobacter nauticus (strain ATCC 700491 / DSM 11845 / VT8) (Marinobacter aquaeolei).